Reading from the N-terminus, the 218-residue chain is Adenylate kinase (218 aa).

10–15 (GAGKGT) serves as a coordination point for ATP. The NMP stretch occupies residues 30 to 59 (STGDMLRAAIQAQTPLGLEAKKVMDDGKLV). Residues Thr-31, Arg-36, 57 to 59 (KLV), 85 to 88 (GFPR), and Gln-92 contribute to the AMP site. The tract at residues 122 to 159 (GRRVHLASGRTYHVIFNPPKKEGVDDITGEPLIQREDD) is LID. ATP is bound by residues Arg-123 and 132–133 (TY). AMP contacts are provided by Arg-156 and Arg-167. Gly-203 contributes to the ATP binding site.

It belongs to the adenylate kinase family. Monomer.

It is found in the cytoplasm. The catalysed reaction is AMP + ATP = 2 ADP. It functions in the pathway purine metabolism; AMP biosynthesis via salvage pathway; AMP from ADP: step 1/1. Functionally, catalyzes the reversible transfer of the terminal phosphate group between ATP and AMP. Plays an important role in cellular energy homeostasis and in adenine nucleotide metabolism. The polypeptide is Adenylate kinase (Prosthecochloris aestuarii (strain DSM 271 / SK 413)).